Reading from the N-terminus, the 279-residue chain is Energy-coupling factor transporter ATP-binding protein EcfA2 (279 aa).

The ABC transporter domain occupies 3–245 (ITLKNVSYTY…LDFMESIQLG (243 aa)). Position 40–47 (40–47 (GHTGSGKS)) interacts with ATP.

This sequence belongs to the ABC transporter superfamily. Energy-coupling factor EcfA family. Forms a stable energy-coupling factor (ECF) transporter complex composed of 2 membrane-embedded substrate-binding proteins (S component), 2 ATP-binding proteins (A component) and 2 transmembrane proteins (T component).

The protein localises to the cell membrane. In terms of biological role, ATP-binding (A) component of a common energy-coupling factor (ECF) ABC-transporter complex. Unlike classic ABC transporters this ECF transporter provides the energy necessary to transport a number of different substrates. The chain is Energy-coupling factor transporter ATP-binding protein EcfA2 from Streptococcus sanguinis (strain SK36).